An 813-amino-acid polypeptide reads, in one-letter code: Probable E3 ubiquitin-protein ligase hulA (813 aa).

In terms of domain architecture, C2 spans 1 to 109 (MGSNLPAQPN…QMGGDEMLTR (109 aa)). Disordered regions lie at residues 131 to 235 (NLST…GWER) and 251 to 351 (RTTT…YFVD). The segment covering 148 to 167 (VQSSTSSGLVPQVAPSSSHP) has biased composition (polar residues). Residues 188–215 (RVPSTTRPSSTAAPASAAGAAVSNSHGS) show a composition bias toward low complexity. The region spanning 227-260 (GRLPAGWERREDNLGRTYYVDHNTRTTTWTRPSS) is the WW 1 domain. Positions 251–264 (RTTTWTRPSSNYNE) are enriched in polar residues. Positions 265–292 (HAQRSQREANMQLERRAHQSRMLPEDRT) are enriched in basic and acidic residues. Residues 293-307 (GANSPNLPESSQQAH) are compositionally biased toward polar residues. A compositionally biased stretch (low complexity) spans 322–331 (ATGATTAGTG). 2 consecutive WW domains span residues 331–364 (GELP…DPRR) and 391–424 (GPLP…DPRL). The 334-residue stretch at 480–813 (SASDLKKRLM…VEETLGFGQE (334 aa)) folds into the HECT domain. The Glycyl thioester intermediate role is filled by C781.

This sequence belongs to the RSP5/NEDD4 family. As to quaternary structure, interacts with creD.

Its subcellular location is the cytoplasm. It carries out the reaction S-ubiquitinyl-[E2 ubiquitin-conjugating enzyme]-L-cysteine + [acceptor protein]-L-lysine = [E2 ubiquitin-conjugating enzyme]-L-cysteine + N(6)-ubiquitinyl-[acceptor protein]-L-lysine.. It functions in the pathway protein modification; protein ubiquitination. Functionally, E3 ubiquitin-protein ligase which accepts ubiquitin from an E2 ubiquitin-conjugating enzyme in the form of a thioester and then directly transfers the ubiquitin to targeted substrates. Probably involved in the regulatory network controlling carbon source utilization. The chain is Probable E3 ubiquitin-protein ligase hulA (hulA) from Aspergillus fumigatus (strain CBS 144.89 / FGSC A1163 / CEA10) (Neosartorya fumigata).